The chain runs to 141 residues: ATP synthase epsilon chain (141 aa).

The protein belongs to the ATPase epsilon chain family. F-type ATPases have 2 components, CF(1) - the catalytic core - and CF(0) - the membrane proton channel. CF(1) has five subunits: alpha(3), beta(3), gamma(1), delta(1), epsilon(1). CF(0) has three main subunits: a, b and c.

Its subcellular location is the cell inner membrane. In terms of biological role, produces ATP from ADP in the presence of a proton gradient across the membrane. This Paraburkholderia phymatum (strain DSM 17167 / CIP 108236 / LMG 21445 / STM815) (Burkholderia phymatum) protein is ATP synthase epsilon chain.